We begin with the raw amino-acid sequence, 229 residues long: Large ribosomal subunit protein uL1 (229 aa).

This sequence belongs to the universal ribosomal protein uL1 family. In terms of assembly, part of the 50S ribosomal subunit.

In terms of biological role, binds directly to 23S rRNA. The L1 stalk is quite mobile in the ribosome, and is involved in E site tRNA release. Functionally, protein L1 is also a translational repressor protein, it controls the translation of the L11 operon by binding to its mRNA. This chain is Large ribosomal subunit protein uL1, found in Phytoplasma australiense.